Here is a 157-residue protein sequence, read N- to C-terminus: Ribosome maturation factor RimP (157 aa).

The protein belongs to the RimP family.

It localises to the cytoplasm. Functionally, required for maturation of 30S ribosomal subunits. The protein is Ribosome maturation factor RimP of Thermus thermophilus (strain ATCC BAA-163 / DSM 7039 / HB27).